We begin with the raw amino-acid sequence, 144 residues long: Protein cornichon (144 aa).

At 1–10 (MAFNFTAFTY) the chain is on the lumenal side. The interval 1 to 57 (MAFNFTAFTYIVALIGDAFLIFFAIFHVIAFDELKTDYKNPIDQCNSLNPLVLPEYL) is interaction with grk. The helical transmembrane segment at 11–31 (IVALIGDAFLIFFAIFHVIAF) threads the bilayer. Residues 32-56 (DELKTDYKNPIDQCNSLNPLVLPEY) are Cytoplasmic-facing. A helical transmembrane segment spans residues 57–77 (LLHLFLNLLFLFCGEWYSLCL). Topologically, residues 78 to 122 (NIPLIAYHIWRYKNRPLMSGPGLYDPTTVLKTDTLSRNLREGWIK) are lumenal. The chain crosses the membrane as a helical span at residues 123 to 143 (LAVYLISFFYYIYGMVYSLIS). Residue Thr-144 is a topological domain, cytoplasmic.

It belongs to the cornichon family. In terms of assembly, interacts with grk.

It localises to the endoplasmic reticulum membrane. Acts as a cargo receptor necessary for the transportation of gurken (grk) to a transitional endoplasmic reticulum (tER) site and promotes its incorporation into coat protein complex II (COPII) vesicles. Associated with gurken, produces a signal received by torpedo resulting in a signaling pathway that first establishes posterior follicle cell fates and normal localization of the anterior and posterior determinants, later they act in a signaling event inducing dorsal follicle cell fates and regulating the dorsal-ventral pattern of egg and embryo. This Drosophila virilis (Fruit fly) protein is Protein cornichon (cni).